Consider the following 91-residue polypeptide: Co-chaperonin GroES (91 aa).

Belongs to the GroES chaperonin family. As to quaternary structure, heptamer of 7 subunits arranged in a ring. Interacts with the chaperonin GroEL.

It is found in the cytoplasm. Its function is as follows. Together with the chaperonin GroEL, plays an essential role in assisting protein folding. The GroEL-GroES system forms a nano-cage that allows encapsulation of the non-native substrate proteins and provides a physical environment optimized to promote and accelerate protein folding. GroES binds to the apical surface of the GroEL ring, thereby capping the opening of the GroEL channel. The sequence is that of Co-chaperonin GroES from Oenococcus oeni (strain ATCC BAA-331 / PSU-1).